We begin with the raw amino-acid sequence, 297 residues long: Probable endonuclease 4 (297 aa).

Zn(2+)-binding residues include H69, H110, E145, D179, H182, H214, D227, H229, and E259.

It belongs to the AP endonuclease 2 family. Zn(2+) is required as a cofactor.

It carries out the reaction Endonucleolytic cleavage to 5'-phosphooligonucleotide end-products.. In terms of biological role, endonuclease IV plays a role in DNA repair. It cleaves phosphodiester bonds at apurinic or apyrimidinic (AP) sites, generating a 3'-hydroxyl group and a 5'-terminal sugar phosphate. The chain is Probable endonuclease 4 from Listeria monocytogenes serotype 4b (strain F2365).